The sequence spans 273 residues: Cell division protein FtsQ (273 aa).

Residues Met-1–Leu-10 lie on the Cytoplasmic side of the membrane. The chain crosses the membrane as a helical span at residues Ile-11–Val-31. Residues Ala-32–Arg-273 lie on the Periplasmic side of the membrane. The region spanning Phe-37–Gln-110 is the POTRA domain.

This sequence belongs to the FtsQ/DivIB family. FtsQ subfamily. Part of a complex composed of FtsB, FtsL and FtsQ.

It localises to the cell inner membrane. In terms of biological role, essential cell division protein. May link together the upstream cell division proteins, which are predominantly cytoplasmic, with the downstream cell division proteins, which are predominantly periplasmic. May control correct divisome assembly. The protein is Cell division protein FtsQ of Bordetella pertussis (strain Tohama I / ATCC BAA-589 / NCTC 13251).